A 636-amino-acid polypeptide reads, in one-letter code: Epithelial sodium channel subunit alpha (636 aa).

The disordered stretch occupies residues 1–28 (MKSENQPEDKRIGKLKREANMQKMKEAA). Residues 1–77 (MKSENQPEDK…VCSKKNRMKT (77 aa)) lie on the Cytoplasmic side of the membrane. A helical membrane pass occupies residues 78–98 (AFWSILFFFTFGLMYWQFGII). The Extracellular segment spans residues 99–549 (YREYFSFPVN…SQWSLWFGSS (451 aa)). 10 cysteine pairs are disulfide-bonded: C126-C293, C218-C225, C270-C277, C381-C466, C403-C443, C403-C462, C407-C458, C416-C443, C416-C466, and C418-C432. A helical transmembrane segment spans residues 550–570 (VLSVVELVELILDFIAITCIL). Residues 571–636 (AIHWLNMNRS…LRRVSSQQTE (66 aa)) are Cytoplasmic-facing.

The protein belongs to the amiloride-sensitive sodium channel (TC 1.A.6) family. SCNN1A subfamily. Heterotrimer; containing an alpha/SCNN1A, a beta/SCNN1B and a gamma/SCNN1G subunit.

It is found in the apical cell membrane. It localises to the cell projection. The protein localises to the cilium. Its subcellular location is the cytoplasmic granule. The protein resides in the cytoplasm. It is found in the cytoplasmic vesicle. It localises to the secretory vesicle. The protein localises to the acrosome. Its subcellular location is the flagellum. The enzyme catalyses Na(+)(in) = Na(+)(out). Its activity is regulated as follows. Originally identified and characterized by its inhibition by the diuretic drug amiloride. Functionally, this is one of the three pore-forming subunits of the heterotrimeric epithelial sodium channel (ENaC), a critical regulator of sodium balance and fluid homeostasis. ENaC operates in epithelial tissues, where it mediates the electrodiffusion of sodium ions from extracellular fluid through the apical membrane of cells, with water following osmotically. The polypeptide is Epithelial sodium channel subunit alpha (Anolis carolinensis (Green anole)).